We begin with the raw amino-acid sequence, 145 residues long: Large ribosomal subunit protein uL15 (145 aa).

The interval 1-58 (MFSLLKPKGAAKRRKIVGRGPGSGLGKTSGRGQKGQKARNTSPRLGFEGGQTPLYRRL) is disordered. Residues 19–33 (RGPGSGLGKTSGRGQ) are compositionally biased toward gly residues.

Belongs to the universal ribosomal protein uL15 family. In terms of assembly, part of the 50S ribosomal subunit.

Binds to the 23S rRNA. The polypeptide is Large ribosomal subunit protein uL15 (Borreliella afzelii (strain PKo) (Borrelia afzelii)).